Here is a 278-residue protein sequence, read N- to C-terminus: Envelope glycoprotein L (278 aa).

Positions 1 to 30 (MCRRPDCGFSFSPGPVILLWCCLLLPIVSS) are cleaved as a signal peptide. Residues 43-256 (VPAECPELTR…DKYYAGLPPE (214 aa)) enclose the gL betaherpesvirus-type domain. Cysteine 154 and cysteine 159 form a disulfide bridge.

Belongs to the herpesviridae glycoprotein L (gL) family. Betaherpesvirinae gL subfamily. Interacts with glycoprotein H (gH); this interaction is necessary for the correct processing and cell surface expression of gH. Forms the envelope pentamer complex (PC) composed of gH, gL, UL128, UL130, and UL131A. The pentamer interacts with host NRP2. Forms the envelope trimer complex composed of gH, gL, and gO. The trimer interacts with host PDGFRA. The trimer also interacts with host EPHA2.

Its subcellular location is the virion membrane. The protein localises to the host cell membrane. It localises to the host Golgi apparatus. It is found in the host trans-Golgi network. Functionally, the heterodimer glycoprotein H-glycoprotein L is required for the fusion of viral and plasma membranes leading to virus entry into the host cell. Acts as a functional inhibitor of gH and maintains gH in an inhibited form. Upon binding to host integrins, gL dissociates from gH leading to activation of the viral fusion glycoproteins gB and gH. In human cytomegalovirus, forms two distincts complexes to mediate viral entry, a trimer and a pentamer at the surface of the virion envelope. The gH-gL-gO trimer is required for infection in fibroblasts by interacting with host PDGFRA, and in glioblastoma cells by interacting with host EPHA2. The gH-gL-UL128-UL130-UL131A pentamer is essential for viral entry in epithelial, endothelial and myeloid cells via interaction with host NRP2. In Homo sapiens (Human), this protein is Envelope glycoprotein L.